Consider the following 354-residue polypeptide: METEGWPALQPLLCLAWIATTLPIIVAALPIPAAAGGHLLRRLLSAFSSRGKTVRPSPASSSGSSSSKAKFTVPQKYFMHFYVVGVLATTILLLAIWFYAYMKMTPLLPESSSYSTIASHLVGSNSFSFGRVHSRTMGHKYHVWRTVFVLLLMEIQVLRRLYETEHVFHYSPSARMHIVGYLTGLFYYVAAPLSLASSCIPEAAEYLQGQVAEFIVKGRARMPDLVIDSSSLLQPLLKLGWTQWIGAVIFIWGSLHQIRCHAILGTLREHKDSDEYVIPCGDWFNRVSCPHYLAELVIYFGMLVASGGEDIPVWFLFVFVITNLSFAAVETHKWYLQKFEDYPRSRYAIIPFVC.

6 helical membrane-spanning segments follow: residues 11 to 31 (PLLCLAWIATTLPIIVAALPI), 78 to 98 (FMHFYVVGVLATTILLLAIWF), 141 to 158 (YHVWRTVFVLLLMEIQVL), 176 to 196 (MHIVGYLTGLFYYVAAPLSLA), 235 to 255 (PLLKLGWTQWIGAVIFIWGSL), and 301 to 321 (GMLVASGGEDIPVWFLFVFVI).

This sequence belongs to the steroid 5-alpha reductase family. Polyprenal reductase subfamily.

It is found in the cell membrane. It catalyses the reaction a di-trans,poly-cis-dolichal + NADP(+) = a di-trans,poly-cis-polyprenal + NADPH + H(+). It functions in the pathway protein modification; protein glycosylation. Its function is as follows. Plays a key role in early steps of protein N-linked glycosylation by being involved in the conversion of polyprenol into dolichol. Acts as a polyprenal reductase that mediates the reduction of polyprenal into dolichal in a NADP-dependent mechanism. Dolichols are required for the synthesis of dolichol-linked monosaccharides and the oligosaccharide precursor used for N-glycosylation. The chain is Polyprenal reductase 1 from Oryza sativa subsp. indica (Rice).